The sequence spans 220 residues: Adenylate kinase (220 aa).

Position 10–15 (10–15 (GAGKGT)) interacts with ATP. Residues 30–59 (STGDMLRAAVKAGTPLGVEAKTYMDEGKLV) are NMP. AMP contacts are provided by residues Thr31, Arg36, 57–59 (KLV), 85–88 (GFPR), and Gln92. The segment at 122-159 (GRRTHPASGRTYHVKFNPPKVEGKDDVTGEPLVQRDDD) is LID. Residues Arg123 and 132–133 (TY) each bind ATP. The AMP site is built by Arg156 and Arg167. Gly206 is an ATP binding site.

It belongs to the adenylate kinase family. Monomer.

Its subcellular location is the cytoplasm. The enzyme catalyses AMP + ATP = 2 ADP. Its pathway is purine metabolism; AMP biosynthesis via salvage pathway; AMP from ADP: step 1/1. Functionally, catalyzes the reversible transfer of the terminal phosphate group between ATP and AMP. Plays an important role in cellular energy homeostasis and in adenine nucleotide metabolism. This chain is Adenylate kinase, found in Burkholderia mallei (strain NCTC 10247).